The chain runs to 275 residues: Dermonecrotic toxin SpeSicTox-betaIIA2iii (275 aa).

Residue H5 is part of the active site. Positions 25 and 27 each coordinate Mg(2+). The Nucleophile role is filled by H41. 2 cysteine pairs are disulfide-bonded: C45–C51 and C47–C190. D85 is a binding site for Mg(2+).

Belongs to the arthropod phospholipase D family. Class II subfamily. Requires Mg(2+) as cofactor. In terms of tissue distribution, expressed by the venom gland.

Its subcellular location is the secreted. It carries out the reaction an N-(acyl)-sphingosylphosphocholine = an N-(acyl)-sphingosyl-1,3-cyclic phosphate + choline. The catalysed reaction is an N-(acyl)-sphingosylphosphoethanolamine = an N-(acyl)-sphingosyl-1,3-cyclic phosphate + ethanolamine. The enzyme catalyses a 1-acyl-sn-glycero-3-phosphocholine = a 1-acyl-sn-glycero-2,3-cyclic phosphate + choline. It catalyses the reaction a 1-acyl-sn-glycero-3-phosphoethanolamine = a 1-acyl-sn-glycero-2,3-cyclic phosphate + ethanolamine. Functionally, dermonecrotic toxins cleave the phosphodiester linkage between the phosphate and headgroup of certain phospholipids (sphingolipid and lysolipid substrates), forming an alcohol (often choline) and a cyclic phosphate. This toxin acts on sphingomyelin (SM). It may also act on ceramide phosphoethanolamine (CPE), lysophosphatidylcholine (LPC) and lysophosphatidylethanolamine (LPE), but not on lysophosphatidylserine (LPS), and lysophosphatidylglycerol (LPG). It acts by transphosphatidylation, releasing exclusively cyclic phosphate products as second products. Induces dermonecrosis, hemolysis, increased vascular permeability, edema, inflammatory response, and platelet aggregation. This chain is Dermonecrotic toxin SpeSicTox-betaIIA2iii, found in Sicarius peruensis (Six-eyed sand spider).